Here is an 87-residue protein sequence, read N- to C-terminus: Small ribosomal subunit protein uS17 (87 aa).

The protein belongs to the universal ribosomal protein uS17 family. As to quaternary structure, part of the 30S ribosomal subunit.

Functionally, one of the primary rRNA binding proteins, it binds specifically to the 5'-end of 16S ribosomal RNA. This chain is Small ribosomal subunit protein uS17, found in Aster yellows witches'-broom phytoplasma (strain AYWB).